Reading from the N-terminus, the 361-residue chain is Queuine tRNA-ribosyltransferase (361 aa).

Aspartate 92 serves as the catalytic Proton acceptor. Substrate-binding positions include aspartate 92–phenylalanine 96, aspartate 146, glutamine 189, and glycine 216. Residues glycine 247–aspartate 253 are RNA binding. Aspartate 266 serves as the catalytic Nucleophile. The interval threonine 271–arginine 275 is RNA binding; important for wobble base 34 recognition. Zn(2+) is bound by residues cysteine 304, cysteine 306, cysteine 309, and histidine 335.

This sequence belongs to the queuine tRNA-ribosyltransferase family. In terms of assembly, homodimer. Within each dimer, one monomer is responsible for RNA recognition and catalysis, while the other monomer binds to the replacement base PreQ1. The cofactor is Zn(2+).

The enzyme catalyses 7-aminomethyl-7-carbaguanine + guanosine(34) in tRNA = 7-aminomethyl-7-carbaguanosine(34) in tRNA + guanine. The protein operates within tRNA modification; tRNA-queuosine biosynthesis. Its function is as follows. Catalyzes the base-exchange of a guanine (G) residue with the queuine precursor 7-aminomethyl-7-deazaguanine (PreQ1) at position 34 (anticodon wobble position) in tRNAs with GU(N) anticodons (tRNA-Asp, -Asn, -His and -Tyr). Catalysis occurs through a double-displacement mechanism. The nucleophile active site attacks the C1' of nucleotide 34 to detach the guanine base from the RNA, forming a covalent enzyme-RNA intermediate. The proton acceptor active site deprotonates the incoming PreQ1, allowing a nucleophilic attack on the C1' of the ribose to form the product. After dissociation, two additional enzymatic reactions on the tRNA convert PreQ1 to queuine (Q), resulting in the hypermodified nucleoside queuosine (7-(((4,5-cis-dihydroxy-2-cyclopenten-1-yl)amino)methyl)-7-deazaguanosine). The sequence is that of Queuine tRNA-ribosyltransferase from Rickettsia felis (strain ATCC VR-1525 / URRWXCal2) (Rickettsia azadi).